Here is a 139-residue protein sequence, read N- to C-terminus: Holo-[acyl-carrier-protein] synthase (139 aa).

Mg(2+) contacts are provided by aspartate 8 and glutamate 61.

It belongs to the P-Pant transferase superfamily. AcpS family. Mg(2+) serves as cofactor.

It localises to the cytoplasm. It catalyses the reaction apo-[ACP] + CoA = holo-[ACP] + adenosine 3',5'-bisphosphate + H(+). Transfers the 4'-phosphopantetheine moiety from coenzyme A to a Ser of acyl-carrier-protein. This chain is Holo-[acyl-carrier-protein] synthase, found in Bradyrhizobium diazoefficiens (strain JCM 10833 / BCRC 13528 / IAM 13628 / NBRC 14792 / USDA 110).